We begin with the raw amino-acid sequence, 96 residues long: Putative protein p29 (96 aa).

This chain is Putative protein p29 (29), found in Acyrthosiphon pisum secondary endosymbiont phage 1 (Bacteriophage APSE-1).